The sequence spans 277 residues: Xyloglucan endotransglucosylase/hydrolase protein 19 (277 aa).

Positions 1–21 are cleaved as a signal peptide; sequence MKSFTFLILFLFAAQSISVYA. The 192-residue stretch at 22–213 folds into the GH16 domain; it reads GSFHKDVKIH…WSKAPFTAYY (192 aa). E99 serves as the catalytic Nucleophile. E103 serves as the catalytic Proton donor. Position 103 (E103) interacts with xyloglucan. N-linked (GlcNAc...) asparagine glycosylation occurs at N107. Xyloglucan is bound by residues 116 to 118, 126 to 128, 192 to 193, and G197; these read HTN, DKE, and HW. 2 cysteine pairs are disulfide-bonded: C221-C230 and C262-C276. A xyloglucan-binding site is contributed by R267.

It belongs to the glycosyl hydrolase 16 family. XTH group 2 subfamily. In terms of processing, contains at least one intrachain disulfide bond essential for its enzymatic activity. In terms of tissue distribution, root specific.

It is found in the secreted. It localises to the cell wall. Its subcellular location is the extracellular space. The protein resides in the apoplast. It catalyses the reaction breaks a beta-(1-&gt;4) bond in the backbone of a xyloglucan and transfers the xyloglucanyl segment on to O-4 of the non-reducing terminal glucose residue of an acceptor, which can be a xyloglucan or an oligosaccharide of xyloglucan.. In terms of biological role, possesses xyloglucan endotransglucosylase (XET) activity in vitro. Does not possess xyloglucan endohydrolysis (XEH) activity. Cleaves and religates xyloglucan polymers, an essential constituent of the primary cell wall, and thereby participates in cell wall construction of growing tissues. Involved in cell proliferation in the tissue reunion process of wounded inflorescence stems. Maybe a downstream target of NAC071 as a consequence of auxin action in wounded stems. The protein is Xyloglucan endotransglucosylase/hydrolase protein 19 of Arabidopsis thaliana (Mouse-ear cress).